Reading from the N-terminus, the 295-residue chain is Fructose-bisphosphate aldolase class 1 (295 aa).

Glutamate 176 functions as the Proton acceptor in the catalytic mechanism. The Schiff-base intermediate with dihydroxyacetone-P role is filled by lysine 213.

This sequence belongs to the class I fructose-bisphosphate aldolase family.

It catalyses the reaction beta-D-fructose 1,6-bisphosphate = D-glyceraldehyde 3-phosphate + dihydroxyacetone phosphate. Its pathway is carbohydrate degradation; glycolysis; D-glyceraldehyde 3-phosphate and glycerone phosphate from D-glucose: step 4/4. This Fusobacterium nucleatum subsp. nucleatum (strain ATCC 25586 / DSM 15643 / BCRC 10681 / CIP 101130 / JCM 8532 / KCTC 2640 / LMG 13131 / VPI 4355) protein is Fructose-bisphosphate aldolase class 1.